The sequence spans 336 residues: Holliday junction branch migration complex subunit RuvB (336 aa).

The tract at residues 4–184 (ADRLVSADSS…FGIVQRLEFY (181 aa)) is large ATPase domain (RuvB-L). Residues I23, R24, G65, K68, T69, T70, 131–133 (EDY), R174, Y184, and R221 each bind ATP. T69 lines the Mg(2+) pocket. Residues 185–255 (QIPDLQHIVS…IAAQALDMLN (71 aa)) form a small ATPAse domain (RuvB-S) region. A head domain (RuvB-H) region spans residues 258 to 336 (AEGFDYMDRK…HFGITPPEMP (79 aa)). DNA contacts are provided by R294, R313, and R318.

This sequence belongs to the RuvB family. Homohexamer. Forms an RuvA(8)-RuvB(12)-Holliday junction (HJ) complex. HJ DNA is sandwiched between 2 RuvA tetramers; dsDNA enters through RuvA and exits via RuvB. An RuvB hexamer assembles on each DNA strand where it exits the tetramer. Each RuvB hexamer is contacted by two RuvA subunits (via domain III) on 2 adjacent RuvB subunits; this complex drives branch migration. In the full resolvosome a probable DNA-RuvA(4)-RuvB(12)-RuvC(2) complex forms which resolves the HJ.

It localises to the cytoplasm. The catalysed reaction is ATP + H2O = ADP + phosphate + H(+). In terms of biological role, the RuvA-RuvB-RuvC complex processes Holliday junction (HJ) DNA during genetic recombination and DNA repair, while the RuvA-RuvB complex plays an important role in the rescue of blocked DNA replication forks via replication fork reversal (RFR). RuvA specifically binds to HJ cruciform DNA, conferring on it an open structure. The RuvB hexamer acts as an ATP-dependent pump, pulling dsDNA into and through the RuvAB complex. RuvB forms 2 homohexamers on either side of HJ DNA bound by 1 or 2 RuvA tetramers; 4 subunits per hexamer contact DNA at a time. Coordinated motions by a converter formed by DNA-disengaged RuvB subunits stimulates ATP hydrolysis and nucleotide exchange. Immobilization of the converter enables RuvB to convert the ATP-contained energy into a lever motion, pulling 2 nucleotides of DNA out of the RuvA tetramer per ATP hydrolyzed, thus driving DNA branch migration. The RuvB motors rotate together with the DNA substrate, which together with the progressing nucleotide cycle form the mechanistic basis for DNA recombination by continuous HJ branch migration. Branch migration allows RuvC to scan DNA until it finds its consensus sequence, where it cleaves and resolves cruciform DNA. The chain is Holliday junction branch migration complex subunit RuvB from Klebsiella pneumoniae (strain 342).